Reading from the N-terminus, the 815-residue chain is MNKFVSQSTIDTFFDGEHADPFSVLGMHETSNGIEVRVLLPDAEKVFVLSKETKNVLCELLRVDERGFFAGVVPNTHSFFAYQLEVYWGNEAQVIEDPYAFHPMINELDNWLLAEGSHKRPYEILGAHFTECDNVAGVNFRLWAPNAKRVSVVGDFNYWDGRRHPMRFHQSSGIWELFLPKVSLGQLYKFELLDCHNQLRLKADPYAFSSQLRPDTASQIGALPEIVSMTEKRRKANQADQPISIYEVHLGSWRRNLENNFWLDYDQIAEELIPYVKDMGFTHIELLPLSEFPFDGSWGYQPIGLYSPTSRFGTAEGFKRLVNKAHKAGINVILDWVPGHFPSDTHGLVAFDGTALYEHADPKEGYHQDWNTLIYNYGRHEVKNYLASNALYWMERFGLDGIRVDAVASMIYRDYSREDGQWIPNQYGGRENLEAIEFLKQTNHLLGTEIPGVVSIAEESTSFAGVTHPPYEGGLGFHFKWNMGWMNDTLSYMKKDPIYRQHHHSQMTFGMVYQYSENFILPLSHDEVVHGKCSLLGKMPGDAWQKFANLRAYYGYMWGYPGKKLLFMGNEFAQGREWNYQESLDWYLLDEFHGGGWHKAIQDYVRDLNHIYQKNAPLFELDTDPQGFEWLVVDDYQNSVFVFERRSKKDERIIVVSNFTPVLRQNYRFGVNIAGEYLEILNSDAQQYMGSNSTNTSKIVTEDIESHNKAQSISIDIPPLATVYLKLHKVKKVRKMRKTSKVEDTAVKTEKKIAKGKTTRTKKTVADTVSEATEVKPKKTVTKRAVVKKVKNEESAVFPNAEVIAESTSVENNVS.

D405 acts as the Nucleophile in catalysis. E458 acts as the Proton donor in catalysis.

This sequence belongs to the glycosyl hydrolase 13 family. GlgB subfamily. As to quaternary structure, monomer.

It catalyses the reaction Transfers a segment of a (1-&gt;4)-alpha-D-glucan chain to a primary hydroxy group in a similar glucan chain.. The protein operates within glycan biosynthesis; glycogen biosynthesis. In terms of biological role, catalyzes the formation of the alpha-1,6-glucosidic linkages in glycogen by scission of a 1,4-alpha-linked oligosaccharide from growing alpha-1,4-glucan chains and the subsequent attachment of the oligosaccharide to the alpha-1,6 position. The polypeptide is 1,4-alpha-glucan branching enzyme GlgB (Histophilus somni (strain 2336) (Haemophilus somnus)).